The following is a 179-amino-acid chain: NAD(P)H-quinone oxidoreductase subunit I, chloroplastic (179 aa).

4Fe-4S ferredoxin-type domains follow at residues 55–84 (GRIH…VDWR) and 95–124 (LNYS…MTEE). The [4Fe-4S] cluster site is built by C64, C67, C70, C74, C104, C107, C110, and C114.

It belongs to the complex I 23 kDa subunit family. As to quaternary structure, NDH is composed of at least 16 different subunits, 5 of which are encoded in the nucleus. [4Fe-4S] cluster serves as cofactor.

It localises to the plastid. It is found in the chloroplast thylakoid membrane. The catalysed reaction is a plastoquinone + NADH + (n+1) H(+)(in) = a plastoquinol + NAD(+) + n H(+)(out). The enzyme catalyses a plastoquinone + NADPH + (n+1) H(+)(in) = a plastoquinol + NADP(+) + n H(+)(out). Its function is as follows. NDH shuttles electrons from NAD(P)H:plastoquinone, via FMN and iron-sulfur (Fe-S) centers, to quinones in the photosynthetic chain and possibly in a chloroplast respiratory chain. The immediate electron acceptor for the enzyme in this species is believed to be plastoquinone. Couples the redox reaction to proton translocation, and thus conserves the redox energy in a proton gradient. The sequence is that of NAD(P)H-quinone oxidoreductase subunit I, chloroplastic from Nuphar advena (Common spatterdock).